The sequence spans 474 residues: UDP-glycosyltransferase 71E1 (474 aa).

UDP-alpha-D-glucose contacts are provided by residues S275, W341 to A342, H359 to E367, and Y381 to Q384.

This sequence belongs to the UDP-glycosyltransferase family.

May glycosylate diterpenes or flavonols in leaves. This is UDP-glycosyltransferase 71E1 from Stevia rebaudiana (Stevia).